The following is a 389-amino-acid chain: N-terminal EF-hand calcium-binding protein 2 (389 aa).

Residue Arg10 is modified to Omega-N-methylarginine. Arg42 is subject to Asymmetric dimethylarginine. EF-hand domains follow at residues 63 to 98 (GGTA…GVLN) and 99 to 132 (EKEL…HMGD). The Ca(2+) site is built by Asp76, Asn78, Asp80, Lys82, Glu87, Asp110, Asp112, Thr114, His116, and Glu121. Positions 173–198 (LKETANQIQSLLSSVESAVEAIEEQT) form a coiled coil. In terms of domain architecture, ABM spans 289–377 (QLVRQEMAVC…LSQPEALSQI (89 aa)).

Interacts (calcium-dependent) with ADORA2A and GRM5. Expressed in the iris, in the ciliary margin of the retina and in the inner portion of the neural retina. Expressed in the spinal dorsal horn with especially strong expression in lamina IIi; found in excitory synaptic boutons (at protein level).

The protein localises to the cytoplasm. Its subcellular location is the cell projection. It localises to the dendrite. It is found in the axon. The protein resides in the cell membrane. May act as a signaling scaffold protein that senses intracellular calcium. Can modulate ligand-induced internalization of ADORA2A and coupling efficiency of mGluR5/GRM5; for both receptors may regulate signaling activity such as promoting MAPK1/3 (ERK1/2) activation. This is N-terminal EF-hand calcium-binding protein 2 (Necab2) from Mus musculus (Mouse).